A 198-amino-acid chain; its full sequence is Adenylyl-sulfate kinase (198 aa).

31–38 contributes to the ATP binding site; the sequence is GLSGAGKS. Serine 105 functions as the Phosphoserine intermediate in the catalytic mechanism.

Belongs to the APS kinase family.

It carries out the reaction adenosine 5'-phosphosulfate + ATP = 3'-phosphoadenylyl sulfate + ADP + H(+). The protein operates within sulfur metabolism; hydrogen sulfide biosynthesis; sulfite from sulfate: step 2/3. Catalyzes the synthesis of activated sulfate. The protein is Adenylyl-sulfate kinase of Shewanella amazonensis (strain ATCC BAA-1098 / SB2B).